The primary structure comprises 48 residues: Delta-actitoxin-Bcg1b (48 aa).

3 cysteine pairs are disulfide-bonded: C4/C45, C6/C35, and C28/C46.

It belongs to the sea anemone sodium channel inhibitory toxin family. Type I subfamily.

The protein localises to the secreted. It localises to the nematocyst. Its function is as follows. Binds to the sodium channels Nav1.1/SCN1A (EC(50)=165 nM), Nav1.5/SCN5A (EC(50)=103 nM) and Nav1.6/SCN8A (EC(50)=133 nM), thereby delaying their inactivation. Also inhibits Nav1.2/SCN2A, Nav1.3/SCN3A, and Nav1.4/SCN4A, but to a lesser extent. Inhibits Nav1.5 differently from isoforms Nav1.1 and Nav1.6. In Nav1.5 the effect consists in a right-shift of inactivation; whereas in both Nav1.1 and Nav1.6 the effect consists in an incomplete inactivation. In Bunodosoma cangicum (Sea anemone), this protein is Delta-actitoxin-Bcg1b.